Reading from the N-terminus, the 450-residue chain is Neuraminidase (450 aa).

The Intravirion segment spans residues 1 to 6; sequence MNPNQK. The chain crosses the membrane as a helical span at residues 7–27; it reads IITIGSICMVVGIISLMLQIG. Residues 11-33 form an involved in apical transport and lipid raft association region; the sequence is GSICMVVGIISLMLQIGNIISVW. Residues 28 to 450 are Virion surface-facing; sequence NIISVWVSHI…GADLPFTIDK (423 aa). A hypervariable stalk region region spans residues 36-71; the sequence is HIIQTWHPNQPEPCNQSINFYTEQAAASVTLAGNSS. N-linked (GlcNAc...) asparagine; by host glycans are attached at residues asparagine 50 and asparagine 69. Residues 72-450 form a head of neuraminidase region; the sequence is LCPISGWAIY…GADLPFTIDK (379 aa). Intrachain disulfides connect cysteine 73–cysteine 398, cysteine 105–cysteine 110, cysteine 165–cysteine 212, cysteine 214–cysteine 219, cysteine 260–cysteine 273, cysteine 262–cysteine 271, cysteine 299–cysteine 316, and cysteine 402–cysteine 427. Position 99 (arginine 99) interacts with substrate. Asparagine 127 carries N-linked (GlcNAc...) asparagine; by host glycosylation. The active-site Proton donor/acceptor is aspartate 132. A substrate-binding site is contributed by arginine 133. Asparagine 216 carries N-linked (GlcNAc...) asparagine; by host glycosylation. A substrate-binding site is contributed by 258–259; the sequence is EE. Arginine 274 is a binding site for substrate. Positions 275, 279, and 305 each coordinate Ca(2+). Arginine 349 contributes to the substrate binding site. Tyrosine 383 (nucleophile) is an active-site residue.

It belongs to the glycosyl hydrolase 34 family. As to quaternary structure, homotetramer. Ca(2+) serves as cofactor. Post-translationally, N-glycosylated.

It localises to the virion membrane. The protein localises to the host apical cell membrane. It catalyses the reaction Hydrolysis of alpha-(2-&gt;3)-, alpha-(2-&gt;6)-, alpha-(2-&gt;8)- glycosidic linkages of terminal sialic acid residues in oligosaccharides, glycoproteins, glycolipids, colominic acid and synthetic substrates.. Inhibited by the neuraminidase inhibitors zanamivir (Relenza) and oseltamivir (Tamiflu). These drugs interfere with the release of progeny virus from infected cells and are effective against all influenza strains. Resistance to neuraminidase inhibitors is quite rare. Its function is as follows. Catalyzes the removal of terminal sialic acid residues from viral and cellular glycoconjugates. Cleaves off the terminal sialic acids on the glycosylated HA during virus budding to facilitate virus release. Additionally helps virus spread through the circulation by further removing sialic acids from the cell surface. These cleavages prevent self-aggregation and ensure the efficient spread of the progeny virus from cell to cell. Otherwise, infection would be limited to one round of replication. Described as a receptor-destroying enzyme because it cleaves a terminal sialic acid from the cellular receptors. May facilitate viral invasion of the upper airways by cleaving the sialic acid moieties on the mucin of the airway epithelial cells. Likely to plays a role in the budding process through its association with lipid rafts during intracellular transport. May additionally display a raft-association independent effect on budding. Plays a role in the determination of host range restriction on replication and virulence. Sialidase activity in late endosome/lysosome traffic seems to enhance virus replication. This Influenza A virus (strain A/Hong Kong/156/1997 H5N1 genotype Gs/Gd) protein is Neuraminidase.